We begin with the raw amino-acid sequence, 105 residues long: DNA-directed RNA polymerase subunit omega (105 aa).

Belongs to the RNA polymerase subunit omega family. As to quaternary structure, the RNAP catalytic core consists of 2 alpha, 1 beta, 1 beta' and 1 omega subunit. When a sigma factor is associated with the core the holoenzyme is formed, which can initiate transcription.

The enzyme catalyses RNA(n) + a ribonucleoside 5'-triphosphate = RNA(n+1) + diphosphate. In terms of biological role, promotes RNA polymerase assembly. Latches the N- and C-terminal regions of the beta' subunit thereby facilitating its interaction with the beta and alpha subunits. The chain is DNA-directed RNA polymerase subunit omega from Streptococcus mutans serotype c (strain ATCC 700610 / UA159).